The primary structure comprises 350 residues: MAEKMQAIMKTKPAYGAELVEVDVPKPGPGEVLIKVLATSICGTDLHIYEWNEWAQSRIKPPQIMGHEVAGEVVEVGPGVEDLQVGDYISVETHIVCGKCYACKHNRYHVCQNTKIFGVDMDGVFAHYAIVPAKNAWKNPKDMPPEYAALQEPLGNAVDTVLAGPIAGRSTLITGAGPLGLLGIAVAKASGAYPVIVSEPSEFRRKLAKKVGADYVVNPFEEDPVKFVMDITDGAGVEVFLEFSGAPKALEQGLKAVTPGGRVSLLGLFPREVTIDFNNLIIFKALEVHGITGRHLWETWYTVSSLIQSGKLNLDPIITHKYKGFDKFEEAFELMRAGKTGKVVFFPHKG.

C42 is a Zn(2+) binding site. Residues T44 and H47 each act as charge relay system in the active site. Residues H67, E68, C97, C100, C103, and C111 each contribute to the Zn(2+) site. NAD(+) is bound by residues L179, E199, R204, 266–268 (LGL), and 291–292 (IT).

This sequence belongs to the zinc-containing alcohol dehydrogenase family. Homotetramer. It depends on Zn(2+) as a cofactor.

The protein resides in the cytoplasm. The catalysed reaction is L-threonine + NAD(+) = (2S)-2-amino-3-oxobutanoate + NADH + H(+). It participates in amino-acid degradation; L-threonine degradation via oxydo-reductase pathway; glycine from L-threonine: step 1/2. In terms of biological role, catalyzes the NAD(+)-dependent oxidation of L-threonine to 2-amino-3-ketobutyrate. To a lesser extent, also catalyzes the oxidation of L-serine. This chain is L-threonine 3-dehydrogenase, found in Thermococcus kodakarensis (strain ATCC BAA-918 / JCM 12380 / KOD1) (Pyrococcus kodakaraensis (strain KOD1)).